The chain runs to 168 residues: Xanthine-guanine phosphoribosyltransferase (168 aa).

Residues 43 to 44 (RG) and 102 to 110 (DDLVDTGAT) each bind 5-phospho-alpha-D-ribose 1-diphosphate. A Mg(2+)-binding site is contributed by D103. D106 and I149 together coordinate guanine. Xanthine is bound by residues D106 and I149. GMP-binding positions include 106-110 (DTGAT) and 148-149 (WI).

This sequence belongs to the purine/pyrimidine phosphoribosyltransferase family. XGPT subfamily. As to quaternary structure, homotetramer. The cofactor is Mg(2+).

The protein localises to the cell inner membrane. The catalysed reaction is GMP + diphosphate = guanine + 5-phospho-alpha-D-ribose 1-diphosphate. It carries out the reaction XMP + diphosphate = xanthine + 5-phospho-alpha-D-ribose 1-diphosphate. The enzyme catalyses IMP + diphosphate = hypoxanthine + 5-phospho-alpha-D-ribose 1-diphosphate. It participates in purine metabolism; GMP biosynthesis via salvage pathway; GMP from guanine: step 1/1. It functions in the pathway purine metabolism; XMP biosynthesis via salvage pathway; XMP from xanthine: step 1/1. In terms of biological role, purine salvage pathway enzyme that catalyzes the transfer of the ribosyl-5-phosphate group from 5-phospho-alpha-D-ribose 1-diphosphate (PRPP) to the N9 position of the 6-oxopurines guanine and xanthine to form the corresponding ribonucleotides GMP (guanosine 5'-monophosphate) and XMP (xanthosine 5'-monophosphate), with the release of PPi. To a lesser extent, also acts on hypoxanthine. The polypeptide is Xanthine-guanine phosphoribosyltransferase (Nitrobacter winogradskyi (strain ATCC 25391 / DSM 10237 / CIP 104748 / NCIMB 11846 / Nb-255)).